The following is a 382-amino-acid chain: Putative oxidoreductase C1F5.03c (382 aa).

Residues 7–27 form a helical membrane-spanning segment; the sequence is IVIVGGGITGVSCLYFLAHHP.

It belongs to the TDA3 family.

The protein localises to the cytoplasm. It is found in the membrane. Its function is as follows. Putative oxidoreductase that negatively regulates the retrieval of cargo from late endosomes to the Golgi. The sequence is that of Putative oxidoreductase C1F5.03c from Schizosaccharomyces pombe (strain 972 / ATCC 24843) (Fission yeast).